We begin with the raw amino-acid sequence, 122 residues long: Large ribosomal subunit protein uL29 (122 aa).

The residue at position 12 (Ser12) is a Phosphoserine.

Belongs to the universal ribosomal protein uL29 family. As to quaternary structure, component of the large ribosomal subunit (LSU). Mature yeast ribosomes consist of a small (40S) and a large (60S) subunit. The 40S small subunit contains 1 molecule of ribosomal RNA (18S rRNA) and at least 33 different proteins. The large 60S subunit contains 3 rRNA molecules (25S, 5.8S and 5S rRNA) and at least 46 different proteins. uL29 is associated with the polypeptide exit tunnel.

Its subcellular location is the cytoplasm. The protein localises to the nucleus. It localises to the nucleolus. Component of the ribosome, a large ribonucleoprotein complex responsible for the synthesis of proteins in the cell. The small ribosomal subunit (SSU) binds messenger RNAs (mRNAs) and translates the encoded message by selecting cognate aminoacyl-transfer RNA (tRNA) molecules. The large subunit (LSU) contains the ribosomal catalytic site termed the peptidyl transferase center (PTC), which catalyzes the formation of peptide bonds, thereby polymerizing the amino acids delivered by tRNAs into a polypeptide chain. The nascent polypeptides leave the ribosome through a tunnel in the LSU and interact with protein factors that function in enzymatic processing, targeting, and the membrane insertion of nascent chains at the exit of the ribosomal tunnel. This chain is Large ribosomal subunit protein uL29 (rpl35), found in Schizosaccharomyces pombe (strain 972 / ATCC 24843) (Fission yeast).